A 315-amino-acid polypeptide reads, in one-letter code: Methionyl-tRNA formyltransferase (315 aa).

An N-terminal domain region spans residues 2-189 (SDSLRIIFAG…LITTLKQLAD (188 aa)). 113–116 (SLLP) contributes to the (6S)-5,6,7,8-tetrahydrofolate binding site. A C-terminal domain region spans residues 210–315 (KEEARIDWSL…EWFIPGNRLA (106 aa)).

It belongs to the Fmt family.

It carries out the reaction L-methionyl-tRNA(fMet) + (6R)-10-formyltetrahydrofolate = N-formyl-L-methionyl-tRNA(fMet) + (6S)-5,6,7,8-tetrahydrofolate + H(+). Functionally, attaches a formyl group to the free amino group of methionyl-tRNA(fMet). The formyl group appears to play a dual role in the initiator identity of N-formylmethionyl-tRNA by promoting its recognition by IF2 and preventing the misappropriation of this tRNA by the elongation apparatus. The sequence is that of Methionyl-tRNA formyltransferase from Salmonella choleraesuis (strain SC-B67).